The chain runs to 275 residues: 2,3,4,5-tetrahydropyridine-2,6-dicarboxylate N-succinyltransferase (275 aa).

The substrate site is built by Arg-104 and Asp-141.

It belongs to the transferase hexapeptide repeat family. Homotrimer.

It localises to the cytoplasm. It carries out the reaction (S)-2,3,4,5-tetrahydrodipicolinate + succinyl-CoA + H2O = (S)-2-succinylamino-6-oxoheptanedioate + CoA. Its pathway is amino-acid biosynthesis; L-lysine biosynthesis via DAP pathway; LL-2,6-diaminopimelate from (S)-tetrahydrodipicolinate (succinylase route): step 1/3. The polypeptide is 2,3,4,5-tetrahydropyridine-2,6-dicarboxylate N-succinyltransferase (Aeromonas hydrophila subsp. hydrophila (strain ATCC 7966 / DSM 30187 / BCRC 13018 / CCUG 14551 / JCM 1027 / KCTC 2358 / NCIMB 9240 / NCTC 8049)).